The following is a 602-amino-acid chain: Solute carrier organic anion transporter family member 1C1 (602 aa).

Residues 1–43 are Cytoplasmic-facing; sequence MDTSSKENIQLFCKTSVQPVGRPSFKTEYPSSEEKQPCCGELK. The chain crosses the membrane as a helical span at residues 44 to 63; that stretch reads VFLGALSFVYFAKALAEGYL. At 64–82 the chain is on the extracellular side; it reads KSTITQIERRFDIPSSLVG. A helical membrane pass occupies residues 83-103; it reads VIDGSFEIGNLLVITFVSYFG. Topologically, residues 104-109 are cytoplasmic; sequence AKLHRP. A helical membrane pass occupies residues 110–134; that stretch reads KIIGAGCLIMGVGTLLIAMPQFFME. Residues 135–139 are Extracellular-facing; the sequence is QYKYE. A helical transmembrane segment spans residues 140–156; it reads IYSPSSNSTLSISPCLL. At 157–238 the chain is on the cytoplasmic side; it reads ESSSQLPVSV…ARDFLPSLKY (82 aa). The interval 190 to 216 is disordered; sequence PRSQSREDSNSSSEKSKFIRDDHTDYQ. Positions 193–214 are enriched in basic and acidic residues; the sequence is QSREDSNSSSEKSKFIRDDHTD. The chain crosses the membrane as a helical span at residues 239-260; sequence LFGNPVYFLYLCTSTVQFNSLF. Residues 261-280 lie on the Extracellular side of the membrane; sequence GMVTYKPKYIEQQYGQSSSR. A helical membrane pass occupies residues 281-304; sequence ANFVIGLINIPAVALGIFSGGIAM. Over 305–308 the chain is Cytoplasmic; sequence KKFR. Residues 309-332 traverse the membrane as a helical segment; sequence ISVCGAAKLYLGSSVFGYLLFLSL. At 333–444 the chain is on the extracellular side; it reads FALGCENSDV…NGCPQMFLYF (112 aa). A Kazal-like domain is found at 360-415; that stretch reads RALFSDCNPRCKCSETKWEPMCGENGITYVSACPAGCQTSNRSGKNIIFYNCTCVG. Disulfide bonds link cysteine 366–cysteine 396, cysteine 372–cysteine 392, and cysteine 381–cysteine 413. Residues asparagine 400, asparagine 410, and asparagine 423 are each glycosylated (N-linked (GlcNAc...) asparagine). The chain crosses the membrane as a helical span at residues 445 to 467; sequence LVISVITSYTLSLGGIPGYILLL. The Cytoplasmic segment spans residues 468-476; it reads RCIKPQLKS. Residues 477–502 traverse the membrane as a helical segment; it reads FALGIYTLSIRVLAGIPAPVYFGVLI. The Extracellular portion of the chain corresponds to 503–536; the sequence is DTSCLKWGFKRCGSRGSCRLYDSNVFRHIYLGLT. Residues 537-554 form a helical membrane-spanning segment; that stretch reads VILGTVSIFLSIAVLFIL. Over 555-602 the chain is Cytoplasmic; it reads KKNYVSKHRNFITKRERTMVSTRFQKENCTTSDHLLQPKYWPGKETQL.

It belongs to the organo anion transporter (TC 2.A.60) family.

It is found in the cell membrane. It carries out the reaction 3,3',5'-triiodo-L-thyronine(out) = 3,3',5'-triiodo-L-thyronine(in). The catalysed reaction is L-thyroxine(out) = L-thyroxine(in). It catalyses the reaction L-thyroxine sulfate(out) = L-thyroxine sulfate(in). Mediates the Na(+)-independent high affinity transport of organic anions such as the thyroid hormones L-thyroxine (T4), L-thyroxine sulfate (T4S), and 3,3',5'-triiodo-L-thyronine (reverse T3, rT3) at the plasma membrane. Regulates T4 levels in different brain regions by transporting T4, and also by serving as an export pump for T4S, which is a source of T4 after hydrolysis by local sulfatases. Increases the access of these substrates to the intracellular sites where they are metabolized by the deiodinases. Other potential substrates, such as triiodothyronine (T3), 17-beta-glucuronosyl estradiol (17beta-estradiol 17-O-(beta-D-glucuronate)), estrone-3-sulfate (E1S) and sulfobromophthalein (BSP) are transported with much lower efficiency. Transports T4 and E1S in a pH-insensitive manner. Facilitates the transport of thyroid hormones across the blood-brain barrier and into glia and neuronal cells in the brain. In Macaca fascicularis (Crab-eating macaque), this protein is Solute carrier organic anion transporter family member 1C1 (SLCO1C1).